Here is a 245-residue protein sequence, read N- to C-terminus: MLIIPAIDLKDGACVRLRQGRMEDSTVFSDDPVSMAAKWVEGGCRRLHLVDLNGAFEGQPVNGEVVTAIAKRYPNLPIQIGGGIRSLETIEHYVKAGVSYVIIGTKAVKQPEFVAEACKAFPGKVIVGLDAKDGFVATDGWAEVSSVQVIDLAKRFEADGVSAIVYTDIAKDGMMQGCNVPFTAALAAATSIPVIASGGIHNLGDIKTLLDAKAPGIVGAITGRAIYEGTLDVAEAQAFCDNYKG.

The active-site Proton acceptor is the Asp-8. The Proton donor role is filled by Asp-130.

This sequence belongs to the HisA/HisF family.

Its subcellular location is the cytoplasm. The enzyme catalyses 1-(5-phospho-beta-D-ribosyl)-5-[(5-phospho-beta-D-ribosylamino)methylideneamino]imidazole-4-carboxamide = 5-[(5-phospho-1-deoxy-D-ribulos-1-ylimino)methylamino]-1-(5-phospho-beta-D-ribosyl)imidazole-4-carboxamide. The protein operates within amino-acid biosynthesis; L-histidine biosynthesis; L-histidine from 5-phospho-alpha-D-ribose 1-diphosphate: step 4/9. This chain is 1-(5-phosphoribosyl)-5-[(5-phosphoribosylamino)methylideneamino] imidazole-4-carboxamide isomerase, found in Pseudomonas putida (strain W619).